A 301-amino-acid polypeptide reads, in one-letter code: MEKDFQDIQQLDSEENDHQLIGDEEQGSHVQNLRTENPRWGGQPPSRPFPQRLCSKFRLSLLALAFNILLLVVICVVSSQSMQLQKEFWTLKETLSNFSTTTLMEFKALDSHGGSRNDNLTSWETILEKKQKDIKADHSTLLFHLKHFPLDLRTLTCQLAFFLSNGTECCPVNWVEFGGSCYWFSRDGLTWAEADQYCQMENAHLLVINSREEQEFVVKHRGAFHIWIGLTDKDGSWKWVDGTEYRSNFKNWAFTQPDNWQGHEEGGSEDCAEILSDGLWNDNFCQQVNRWACERKRDITY.

The interval 1-29 (MEKDFQDIQQLDSEENDHQLIGDEEQGSH) is disordered. Topologically, residues 1-58 (MEKDFQDIQQLDSEENDHQLIGDEEQGSHVQNLRTENPRWGGQPPSRPFPQRLCSKFR) are cytoplasmic. At Ser-13 the chain carries Phosphoserine. Residue Cys-54 is the site of S-palmitoyl cysteine attachment. The chain crosses the membrane as a helical; Signal-anchor for type II membrane protein span at residues 59–79 (LSLLALAFNILLLVVICVVSS). Residues 80-301 (QSMQLQKEFW…ACERKRDITY (222 aa)) are Extracellular-facing. 3 N-linked (GlcNAc...) asparagine glycosylation sites follow: Asn-97, Asn-119, and Asn-165. Residues 169–295 (CCPVNWVEFG…QQVNRWACER (127 aa)) form the C-type lectin domain. Intrachain disulfides connect Cys-170–Cys-181, Cys-198–Cys-293, and Cys-271–Cys-285.

Interacts with LASS2. As to expression, expressed exclusively in hepatic parenchymal cells.

It is found in the membrane. Functionally, mediates the endocytosis of plasma glycoproteins to which the terminal sialic acid residue on their complex carbohydrate moieties has been removed. The receptor recognizes terminal galactose and N-acetylgalactosamine units. After ligand binding to the receptor, the resulting complex is internalized and transported to a sorting organelle, where receptor and ligand are disassociated. The receptor then returns to the cell membrane surface. In Rattus norvegicus (Rat), this protein is Asialoglycoprotein receptor 2 (Asgr2).